The sequence spans 553 residues: Arginine--tRNA ligase (553 aa).

Residues A130–H140 carry the 'HIGH' region motif.

This sequence belongs to the class-I aminoacyl-tRNA synthetase family. Monomer.

It is found in the cytoplasm. It carries out the reaction tRNA(Arg) + L-arginine + ATP = L-arginyl-tRNA(Arg) + AMP + diphosphate. This Staphylococcus epidermidis (strain ATCC 12228 / FDA PCI 1200) protein is Arginine--tRNA ligase.